We begin with the raw amino-acid sequence, 115 residues long: NAD(P)H-quinone oxidoreductase subunit M (115 aa).

Belongs to the complex I NdhM subunit family. NDH-1 can be composed of about 15 different subunits; different subcomplexes with different compositions have been identified which probably have different functions.

The protein resides in the cellular thylakoid membrane. It catalyses the reaction a plastoquinone + NADH + (n+1) H(+)(in) = a plastoquinol + NAD(+) + n H(+)(out). It carries out the reaction a plastoquinone + NADPH + (n+1) H(+)(in) = a plastoquinol + NADP(+) + n H(+)(out). In terms of biological role, NDH-1 shuttles electrons from an unknown electron donor, via FMN and iron-sulfur (Fe-S) centers, to quinones in the respiratory and/or the photosynthetic chain. The immediate electron acceptor for the enzyme in this species is believed to be plastoquinone. Couples the redox reaction to proton translocation, and thus conserves the redox energy in a proton gradient. Cyanobacterial NDH-1 also plays a role in inorganic carbon-concentration. This Prochlorococcus marinus (strain MIT 9312) protein is NAD(P)H-quinone oxidoreductase subunit M.